A 182-amino-acid chain; its full sequence is UPF0397 protein llmg_0343 (182 aa).

The next 5 membrane-spanning stretches (helical) occupy residues 8–28 (IVVATGIGAALFVIIGWLINI), 42–62 (AVLALFSALFGPLAGFLIGFI), 74–94 (APWWTWVLGSGLMGLFLGFGV), 114–134 (IVQFLANVVVWGLIAPIGDIL), and 146–166 (QGVVAGLVNALTIAVAGTLLL).

It belongs to the UPF0397 family.

The protein localises to the cell membrane. The chain is UPF0397 protein llmg_0343 from Lactococcus lactis subsp. cremoris (strain MG1363).